Here is a 454-residue protein sequence, read N- to C-terminus: Nuclear envelope integral membrane protein (454 aa).

Residues 1–18 (MHSAGLLMLTVAGYFTSG) form the signal peptide. A glycan (N-linked (GlcNAc...) asparagine) is linked at Asn-38. The next 5 helical transmembrane spans lie at 138-158 (IPLDLWRLAQFAVGILILFSA), 166-186 (VFYYLVGIVIGICASLLVVIY), 197-217 (MMYGVLIGGWTIGFYVIKQLA), 231-251 (VLGYLVITGLISFLICYRIGP), and 280-300 (TSAVIFIMVLVFVAHYFPISW). Residues 388-405 (SMDAAPEEESVEEPEEDK) show a composition bias toward acidic residues. The disordered stretch occupies residues 388–454 (SMDAAPEEES…QEVDLRQVVQ (67 aa)). Polar residues predominate over residues 414–424 (NSQFRYQQAAR). Acidic residues predominate over residues 428–446 (PEPESESDDSEEEEFFEQE).

This sequence belongs to the NEMP family. As to quaternary structure, interacts with OTE. As to expression, expressed in both germline and somatic cells in the larval testis and prepupal ovary (at protein level). Also detected in the larval eye and larval wing disk (at protein level).

Its subcellular location is the nucleus inner membrane. Contributes to nuclear envelope stiffness in germ cells. Required for male and female fertility. This Drosophila melanogaster (Fruit fly) protein is Nuclear envelope integral membrane protein.